A 120-amino-acid polypeptide reads, in one-letter code: Crustacean hyperglycemic hormones 2 (120 aa).

Positions Met1–Val27 are cleaved as a signal peptide. Intrachain disulfides connect Cys53–Cys89, Cys69–Cys85, and Cys72–Cys98. The residue at position 118 (Val118) is a Valine amide.

This sequence belongs to the arthropod CHH/MIH/GIH/VIH hormone family.

The protein resides in the secreted. Functionally, hormone found in the sinus gland of isopods and decapods which controls the blood sugar level. Has a secretagogue action over the amylase released from the midgut gland. May act as a stress hormone and may be involved in the control of molting and reproduction. This Penaeus japonicus (Kuruma prawn) protein is Crustacean hyperglycemic hormones 2.